Here is a 333-residue protein sequence, read N- to C-terminus: Glyceraldehyde-3-phosphate dehydrogenase (333 aa).

Position 1 is an N-acetylserine (Ser1). NAD(+) is bound by residues 10-11 (RI), Asp31, and Ser118. D-glyceraldehyde 3-phosphate is bound by residues 147-149 (SCT), Thr178, 207-208 (TG), and Arg230. Cys148 serves as the catalytic Nucleophile. Asn312 serves as a coordination point for NAD(+).

It belongs to the glyceraldehyde-3-phosphate dehydrogenase family. Homotetramer.

It is found in the cytoplasm. It carries out the reaction D-glyceraldehyde 3-phosphate + phosphate + NAD(+) = (2R)-3-phospho-glyceroyl phosphate + NADH + H(+). Its pathway is carbohydrate degradation; glycolysis; pyruvate from D-glyceraldehyde 3-phosphate: step 1/5. In Homarus americanus (American lobster), this protein is Glyceraldehyde-3-phosphate dehydrogenase.